The sequence spans 113 residues: Iron-sulfur cluster insertion protein ErpA (113 aa).

Residues C41, C105, and C107 each coordinate iron-sulfur cluster.

Belongs to the HesB/IscA family. As to quaternary structure, homodimer. Requires iron-sulfur cluster as cofactor.

Required for insertion of 4Fe-4S clusters for at least IspG. The chain is Iron-sulfur cluster insertion protein ErpA from Actinobacillus pleuropneumoniae serotype 3 (strain JL03).